The primary structure comprises 559 residues: Paxillin (559 aa).

The LD motif 1 signature appears at 3 to 15 (DLDALLADLESTT). The disordered stretch occupies residues 17–139 (HISKRPVFLT…SPTMTSTSLG (123 aa)). Tyrosine 31 carries the phosphotyrosine modification. Residues 45 to 54 (VPPPVPPPPS) are compositionally biased toward pro residues. The segment covering 79–98 (QQPQSQSPIYSSSAKSSSAS) has biased composition (low complexity). Residue tyrosine 118 is modified to Phosphotyrosine; by FAK1. Positions 121–137 (PNKQKSAEPSPTMTSTS) are enriched in polar residues. An LD motif 2 motif is present at residues 144-156 (ELDRLLLELNAVQ). 2 disordered regions span residues 158–213 (NPPS…GIED) and 225–262 (LESS…SASS). Positions 217–229 (SVESLLDELESSV) match the LD motif 3 motif. A compositionally biased stretch (polar residues) spans 237–262 (TVSQGEVSSPQRVNASQQQTRISASS). The segment at 263-282 (ATRELDELMASLSDFKFMAQ) is required for binding to PARVA and ILK. 2 short sequence motifs (LD motif) span residues 266–277 (ELDELMASLSDF) and 301–313 (QLDT…QSDL). Positions 281 to 301 (AQGKAGGSSSPPSTTPKPGSQ) are disordered. LIM zinc-binding domains follow at residues 326–376 (CGAC…CEKD), 385–435 (CYYC…CRKD), 444–494 (CGGC…CEVH), and 503–553 (CSGC…CQNC).

In terms of assembly, interacts (via LD motif 4) with PARVA/PARVIN and ILK. Post-translationally, phosphorylated on tyrosine residues during integrin-mediated cell adhesion, embryonic development, fibroblast transformation and following stimulation of cells by mitogens.

It localises to the cytoplasm. The protein localises to the cytoskeleton. Its subcellular location is the cell junction. The protein resides in the focal adhesion. It is found in the cell cortex. In terms of biological role, cytoskeletal protein involved in actin-membrane attachment at sites of cell adhesion to the extracellular matrix (focal adhesion). Binds in vitro to vinculin as well as to the SH3 domain of c-SRC and, when tyrosine phosphorylated, to the SH2 domain of v-CRK. The chain is Paxillin (PXN) from Gallus gallus (Chicken).